Reading from the N-terminus, the 61-residue chain is Metallothionein-2 (61 aa).

Methionine 1 is subject to N-acetylmethionine. A beta region spans residues 1–29; it reads MDPNCSCATDGSCSCAGSCKCKECKCTTC. Residues cysteine 5, cysteine 7, cysteine 13, cysteine 15, cysteine 19, cysteine 21, cysteine 24, cysteine 26, cysteine 29, cysteine 33, cysteine 34, cysteine 36, cysteine 37, cysteine 41, cysteine 44, cysteine 48, cysteine 50, and cysteine 57 each coordinate a divalent metal cation. Positions 30–61 are alpha; it reads KKSCCSCCPVGCAKCSQGCVCKEASDKCSCCA. Phosphoserine is present on serine 58. A divalent metal cation contacts are provided by cysteine 59 and cysteine 60.

The protein belongs to the metallothionein superfamily. Type 1 family.

Its function is as follows. Metallothioneins have a high content of cysteine residues that bind various heavy metals; these proteins are transcriptionally regulated by both heavy metals and glucocorticoids. The chain is Metallothionein-2 (MT2) from Cricetulus griseus (Chinese hamster).